A 315-amino-acid polypeptide reads, in one-letter code: Aspartate carbamoyltransferase catalytic subunit (315 aa).

Carbamoyl phosphate contacts are provided by R65 and T66. K93 lines the L-aspartate pocket. The carbamoyl phosphate site is built by R115, H145, and Q148. Residues R179 and R234 each contribute to the L-aspartate site. Carbamoyl phosphate-binding residues include G275 and P276.

Belongs to the aspartate/ornithine carbamoyltransferase superfamily. ATCase family. Heterododecamer (2C3:3R2) of six catalytic PyrB chains organized as two trimers (C3), and six regulatory PyrI chains organized as three dimers (R2).

It carries out the reaction carbamoyl phosphate + L-aspartate = N-carbamoyl-L-aspartate + phosphate + H(+). The protein operates within pyrimidine metabolism; UMP biosynthesis via de novo pathway; (S)-dihydroorotate from bicarbonate: step 2/3. Its function is as follows. Catalyzes the condensation of carbamoyl phosphate and aspartate to form carbamoyl aspartate and inorganic phosphate, the committed step in the de novo pyrimidine nucleotide biosynthesis pathway. The protein is Aspartate carbamoyltransferase catalytic subunit of Xanthomonas axonopodis pv. citri (strain 306).